The primary structure comprises 386 residues: Chaperone protein DnaJ (386 aa).

The region spanning 5-70 is the J domain; it reads DYYEVLGVER…QKRAAYDRYG (66 aa). The CR-type zinc finger occupies 138–216; the sequence is GKDETIHVPQ…CGGHGQVKEE (79 aa). Zn(2+)-binding residues include Cys-151, Cys-154, Cys-168, Cys-171, Cys-190, Cys-193, Cys-204, and Cys-207. CXXCXGXG motif repeat units follow at residues 151 to 158, 168 to 175, 190 to 197, and 204 to 211; these read CRPCEGTG, CETCGGHG, CHICQGRG, and CKTCGGHG.

The protein belongs to the DnaJ family. In terms of assembly, homodimer. Zn(2+) serves as cofactor.

The protein localises to the cytoplasm. Functionally, participates actively in the response to hyperosmotic and heat shock by preventing the aggregation of stress-denatured proteins and by disaggregating proteins, also in an autonomous, DnaK-independent fashion. Unfolded proteins bind initially to DnaJ; upon interaction with the DnaJ-bound protein, DnaK hydrolyzes its bound ATP, resulting in the formation of a stable complex. GrpE releases ADP from DnaK; ATP binding to DnaK triggers the release of the substrate protein, thus completing the reaction cycle. Several rounds of ATP-dependent interactions between DnaJ, DnaK and GrpE are required for fully efficient folding. Also involved, together with DnaK and GrpE, in the DNA replication of plasmids through activation of initiation proteins. The protein is Chaperone protein DnaJ of Hyphomonas neptunium (strain ATCC 15444).